A 375-amino-acid polypeptide reads, in one-letter code: 4-hydroxy-3-methylbut-2-en-1-yl diphosphate synthase (flavodoxin) (375 aa).

[4Fe-4S] cluster-binding residues include C270, C273, C305, and E312.

This sequence belongs to the IspG family. [4Fe-4S] cluster serves as cofactor.

It carries out the reaction (2E)-4-hydroxy-3-methylbut-2-enyl diphosphate + oxidized [flavodoxin] + H2O + 2 H(+) = 2-C-methyl-D-erythritol 2,4-cyclic diphosphate + reduced [flavodoxin]. It participates in isoprenoid biosynthesis; isopentenyl diphosphate biosynthesis via DXP pathway; isopentenyl diphosphate from 1-deoxy-D-xylulose 5-phosphate: step 5/6. In terms of biological role, converts 2C-methyl-D-erythritol 2,4-cyclodiphosphate (ME-2,4cPP) into 1-hydroxy-2-methyl-2-(E)-butenyl 4-diphosphate. The protein is 4-hydroxy-3-methylbut-2-en-1-yl diphosphate synthase (flavodoxin) of Shigella flexneri serotype 5b (strain 8401).